Reading from the N-terminus, the 323-residue chain is Zinc finger protein 784 (323 aa).

Positions 1 to 26 (MAAARPEAQSRSSPTPESRSQEPLDL) are disordered. The segment covering 9-18 (QSRSSPTPES) has biased composition (polar residues). S13 carries the phosphoserine modification. 6 consecutive C2H2-type zinc fingers follow at residues 65–87 (FHCALCPAAFRLVSELLFHEHGH), 101–123 (SRCHVCGHSCPGPASLRAHYSLH), 129–151 (YRCALCPRAFKALAPLLRHQHRH), 196–218 (FACRFCAKPFRRSSDMRDHERVH), 224–246 (YHCGICGKGFTQSSVLSGHARIH), and 252–274 (FRCTLCDRTFNNSSNFRKHQRTH). The disordered stretch occupies residues 269–323 (KHQRTHFHGPGPGLGDSGGQLGSSAAEGSGSGCGVGDPAEEGRGETAKVKVEADQ). Residues 278–289 (PGPGLGDSGGQL) are compositionally biased toward gly residues. Positions 308 to 323 (EEGRGETAKVKVEADQ) are enriched in basic and acidic residues. K318 participates in a covalent cross-link: Glycyl lysine isopeptide (Lys-Gly) (interchain with G-Cter in SUMO2).

It belongs to the krueppel C2H2-type zinc-finger protein family.

Its subcellular location is the nucleus. Functionally, may be involved in transcriptional regulation. In Homo sapiens (Human), this protein is Zinc finger protein 784 (ZNF784).